A 186-amino-acid chain; its full sequence is Ribosome-recycling factor (186 aa).

The tract at residues 144 to 163 (EKDGVIGQDESRAQSERVQK) is disordered.

It belongs to the RRF family.

It is found in the cytoplasm. Its function is as follows. Responsible for the release of ribosomes from messenger RNA at the termination of protein biosynthesis. May increase the efficiency of translation by recycling ribosomes from one round of translation to another. This is Ribosome-recycling factor from Rhizobium etli (strain CIAT 652).